Reading from the N-terminus, the 466-residue chain is Soluble pyridine nucleotide transhydrogenase (466 aa).

36-45 is a binding site for FAD; it reads ERYNNVGGGC.

Belongs to the class-I pyridine nucleotide-disulfide oxidoreductase family. FAD is required as a cofactor.

Its subcellular location is the cytoplasm. It carries out the reaction NAD(+) + NADPH = NADH + NADP(+). Functionally, conversion of NADPH, generated by peripheral catabolic pathways, to NADH, which can enter the respiratory chain for energy generation. This chain is Soluble pyridine nucleotide transhydrogenase, found in Yersinia enterocolitica serotype O:8 / biotype 1B (strain NCTC 13174 / 8081).